The following is a 1977-amino-acid chain: Protein rotatin homolog (1977 aa).

A disordered region spans residues Ser-141–Tyr-166.

This sequence belongs to the rotatin family. As to quaternary structure, interacts with Rcd4;this complex is recruited to daughter centrioles before their conversion to centrosomes.

It is found in the cytoplasm. Its subcellular location is the cytoskeleton. It localises to the microtubule organizing center. The protein resides in the centrosome. The protein localises to the centriole. Its function is as follows. Participes in the structural integrity of both centrioles and basal bodies and in centriole cohesion. Participates in the later stages of centriole assembly through the interaction with Rcd4 leading to the centriole to centrosome conversion. This is Protein rotatin homolog from Drosophila melanogaster (Fruit fly).